The chain runs to 437 residues: Protein translocase subunit SecY (437 aa).

Transmembrane regions (helical) follow at residues 19–39 (LFTL…APGV), 68–88 (LLQI…SIIL), 121–141 (VALA…GALF), 156–176 (IFTT…VMWL), 188–208 (GMSI…LWAI), 218–238 (WIEF…VVFV), 274–294 (GVIP…IVQF), 317–337 (YIAT…AISF), 378–398 (SLYL…FGGA), and 400–420 (QNFP…LETV).

The protein belongs to the SecY/SEC61-alpha family. Component of the Sec protein translocase complex. Heterotrimer consisting of SecY, SecE and SecG subunits. The heterotrimers can form oligomers, although 1 heterotrimer is thought to be able to translocate proteins. Interacts with the ribosome. Interacts with SecDF, and other proteins may be involved. Interacts with SecA.

It localises to the cell membrane. The central subunit of the protein translocation channel SecYEG. Consists of two halves formed by TMs 1-5 and 6-10. These two domains form a lateral gate at the front which open onto the bilayer between TMs 2 and 7, and are clamped together by SecE at the back. The channel is closed by both a pore ring composed of hydrophobic SecY resides and a short helix (helix 2A) on the extracellular side of the membrane which forms a plug. The plug probably moves laterally to allow the channel to open. The ring and the pore may move independently. This chain is Protein translocase subunit SecY, found in Streptomyces griseus.